Reading from the N-terminus, the 355-residue chain is S-adenosylmethionine:tRNA ribosyltransferase-isomerase (355 aa).

It belongs to the QueA family. As to quaternary structure, monomer.

The protein localises to the cytoplasm. The enzyme catalyses 7-aminomethyl-7-carbaguanosine(34) in tRNA + S-adenosyl-L-methionine = epoxyqueuosine(34) in tRNA + adenine + L-methionine + 2 H(+). Its pathway is tRNA modification; tRNA-queuosine biosynthesis. Functionally, transfers and isomerizes the ribose moiety from AdoMet to the 7-aminomethyl group of 7-deazaguanine (preQ1-tRNA) to give epoxyqueuosine (oQ-tRNA). The chain is S-adenosylmethionine:tRNA ribosyltransferase-isomerase from Burkholderia lata (strain ATCC 17760 / DSM 23089 / LMG 22485 / NCIMB 9086 / R18194 / 383).